A 39-amino-acid chain; its full sequence is Contryphan-Cal2 (39 aa).

The N-terminal stretch at 1–20 (MTRTAVLLLTLLFLVAMAAS) is a signal peptide. A disulfide bond links Cys29 and Cys35.

In terms of tissue distribution, expressed by the venom duct.

Its subcellular location is the secreted. Probable neurotoxin. The polypeptide is Contryphan-Cal2 (Californiconus californicus (California cone)).